The following is a 66-amino-acid chain: ATP synthase protein 8 (66 aa).

The chain crosses the membrane as a helical span at residues 8-24 (PWPMVIMSMILTLFYIT). K54 is modified (N6-acetyllysine; alternate). Position 54 is an N6-succinyllysine; alternate (K54). K57 bears the N6-acetyllysine mark.

Belongs to the ATPase protein 8 family. As to quaternary structure, F-type ATPases have 2 components, CF(1) - the catalytic core - and CF(0) - the membrane proton channel. Component of an ATP synthase complex composed of ATP5PB, ATP5MC1, ATP5F1E, ATP5PD, ATP5ME, ATP5PF, ATP5MF, MT-ATP6, MT-ATP8, ATP5F1A, ATP5F1B, ATP5F1D, ATP5F1C, ATP5PO, ATP5MG, ATP5MK and ATP5MJ. Interacts with PRICKLE3.

The protein resides in the mitochondrion membrane. Functionally, mitochondrial membrane ATP synthase (F(1)F(0) ATP synthase or Complex V) produces ATP from ADP in the presence of a proton gradient across the membrane which is generated by electron transport complexes of the respiratory chain. F-type ATPases consist of two structural domains, F(1) - containing the extramembraneous catalytic core and F(0) - containing the membrane proton channel, linked together by a central stalk and a peripheral stalk. During catalysis, ATP synthesis in the catalytic domain of F(1) is coupled via a rotary mechanism of the central stalk subunits to proton translocation. Part of the complex F(0) domain. Minor subunit located with subunit a in the membrane. The protein is ATP synthase protein 8 (MT-ATP8) of Alouatta sara (Bolivian red howler monkey).